Here is a 507-residue protein sequence, read N- to C-terminus: Glutamyl-tRNA(Gln) amidotransferase subunit A, mitochondrial (507 aa).

Residues Lys-79 and Ser-160 each act as charge relay system in the active site. Ser-184 serves as the catalytic Acyl-ester intermediate.

This sequence belongs to the amidase family. GatA subfamily. In terms of assembly, subunit of the heterotrimeric GatCAB amidotransferase (AdT) complex, composed of A, B and C subunits.

It localises to the mitochondrion. The catalysed reaction is L-glutamyl-tRNA(Gln) + L-glutamine + ATP + H2O = L-glutaminyl-tRNA(Gln) + L-glutamate + ADP + phosphate + H(+). In terms of biological role, allows the formation of correctly charged Gln-tRNA(Gln) through the transamidation of misacylated Glu-tRNA(Gln) in the mitochondria. The reaction takes place in the presence of glutamine and ATP through an activated gamma-phospho-Glu-tRNA(Gln). This is Glutamyl-tRNA(Gln) amidotransferase subunit A, mitochondrial from Drosophila pseudoobscura pseudoobscura (Fruit fly).